We begin with the raw amino-acid sequence, 500 residues long: MNSFPWLTIFVVLPISGGSLIFLFPHRGNKVIKWYTIFICIFELLLMTYAFSYYFQLDDPLIQLTEDYKWIQFFDFYWRLGIDGFSLGPILLTGFITTLATLAARPITRDSRLFHFLMLAMYSGQIGLFSSQDLLLFFIMWELELIPVYLLLSMWGGKKRLYSATKFILYTAGGSVFLLMGALGIALYGSNEPRFHFETSANQSYPVALEIFFYIGFLIAFAVKSPIIPLHTWLPDTHGEAHYSTCMLLAGILLKMGAYGLVRINMELLPHAHSIFSPWLIIVGVMQIIYAASTSPGQRNLKKRIAYSSVSHMGFIIIGICSISDMGLNGAILQIISHGFIGAALFFLAGTGYDRIRRVYLDEMGGMATSMPKIFTTFSILSLASLALPGMSGFFAELIVFFGIITGQKYLLMSKILITFVMAVGMILTPIYLLSMLRQMFYGYKLFNAPNSYFFDSGPRELFVSISILLPVIGIGFYPDFVFSLSVDRVEAILSNYFYR.

14 helical membrane-spanning segments follow: residues 4-24 (FPWL…IFLF), 31-51 (VIKW…TYAF), 84-104 (GFSL…TLAA), 111-129 (SRLF…IGLF), 134-154 (LLLF…LLSM), 167-187 (FILY…GIAL), 208-228 (ALEI…SPII), 242-262 (HYST…YGLV), 272-292 (AHSI…IYAA), 305-325 (IAYS…SISD), 330-350 (GAIL…FLAG), 386-406 (LALP…GIIT), 416-436 (ILIT…LLSM), and 463-483 (FVSI…DFVF).

Belongs to the complex I subunit 4 family.

The protein resides in the plastid. It is found in the chloroplast thylakoid membrane. The enzyme catalyses a plastoquinone + NADH + (n+1) H(+)(in) = a plastoquinol + NAD(+) + n H(+)(out). The catalysed reaction is a plastoquinone + NADPH + (n+1) H(+)(in) = a plastoquinol + NADP(+) + n H(+)(out). The polypeptide is NAD(P)H-quinone oxidoreductase chain 4, chloroplastic (Manihot esculenta (Cassava)).